Consider the following 197-residue polypeptide: uncharacterized protein (197 aa).

The helical transmembrane segment at 150 to 172 (SLKLNTTLPMFALNLICLLRSIL) threads the bilayer.

It localises to the membrane. This is an uncharacterized protein from Saccharomyces cerevisiae (strain ATCC 204508 / S288c) (Baker's yeast).